Here is a 187-residue protein sequence, read N- to C-terminus: UPF0232 protein Mb0004 (187 aa).

2 stretches are compositionally biased toward basic and acidic residues: residues 1 to 17 (MTGSVDRPDQNRGERLM) and 35 to 45 (AARARGQDAGR). 3 disordered regions span residues 1–23 (MTGSVDRPDQNRGERLMKSPGLD), 35–75 (AARA…DPQP), and 168–187 (PSWRKGPRHIAGRGPRDTYG).

The protein belongs to the UPF0232 family.

This Mycobacterium bovis (strain ATCC BAA-935 / AF2122/97) protein is UPF0232 protein Mb0004.